A 164-amino-acid polypeptide reads, in one-letter code: Large ribosomal subunit protein uL10 (164 aa).

Belongs to the universal ribosomal protein uL10 family. As to quaternary structure, part of the ribosomal stalk of the 50S ribosomal subunit. The N-terminus interacts with L11 and the large rRNA to form the base of the stalk. The C-terminus forms an elongated spine to which L12 dimers bind in a sequential fashion forming a multimeric L10(L12)X complex.

Forms part of the ribosomal stalk, playing a central role in the interaction of the ribosome with GTP-bound translation factors. The polypeptide is Large ribosomal subunit protein uL10 (Aliivibrio salmonicida (strain LFI1238) (Vibrio salmonicida (strain LFI1238))).